The sequence spans 94 residues: Large ribosomal subunit protein bL25 (94 aa).

Belongs to the bacterial ribosomal protein bL25 family. As to quaternary structure, part of the 50S ribosomal subunit; part of the 5S rRNA/L5/L18/L25 subcomplex. Contacts the 5S rRNA. Binds to the 5S rRNA independently of L5 and L18.

Functionally, this is one of the proteins that binds to the 5S RNA in the ribosome where it forms part of the central protuberance. This chain is Large ribosomal subunit protein bL25, found in Erwinia tasmaniensis (strain DSM 17950 / CFBP 7177 / CIP 109463 / NCPPB 4357 / Et1/99).